A 185-amino-acid polypeptide reads, in one-letter code: Prenylated Rab acceptor protein 1 (185 aa).

The Cytoplasmic segment spans residues 1–78 (MAAQKDQQKD…RNVEYYQSNY (78 aa)). The segment at 30–54 (AGREWLERRRATIRPWGTFVDQQRF) is required for interaction with prenylated RAB3A and VAMP2. A run of 2 helical transmembrane segments spans residues 79 to 94 (VFVFLGLILYCVVTSP) and 95 to 112 (MLLVALAVFFGACYILYL). Over 113–131 (RTLQSKLVLFGREVSPAHQ) the chain is Cytoplasmic. 2 helical membrane passes run 132-148 (YALAGGVSFPFFWLAGA) and 149-165 (GSAVFWVLGATLVLIGS). A required for interaction with GDI1 region spans residues 165-185 (SHAAFHQIEPADGEELQMEPV). Residues 166 to 185 (HAAFHQIEPADGEELQMEPV) lie on the Cytoplasmic side of the membrane. The segment at 175 to 185 (ADGEELQMEPV) is required for interaction with prenylated RAB3A and VAMP2. The segment at 175–185 (ADGEELQMEPV) is homodimerization.

The protein belongs to the PRA1 family. Homodimers. Interacts specifically with both prenylated Rab proteins (including RAB3A and RAB1), and VAMP2 (synaptobrevin-2), in an exclusive way. Interacts with NDRG1. Interacts with free GDI1 in the absence of Rab proteins. Also interacts with PCLO. In terms of tissue distribution, ubiquitous.

It localises to the cell membrane. The protein localises to the cytoplasm. It is found in the golgi apparatus. Its subcellular location is the cytoplasmic vesicle. The protein resides in the secretory vesicle. It localises to the synaptic vesicle. Its function is as follows. General Rab protein regulator required for vesicle formation from the Golgi complex. May control vesicle docking and fusion by mediating the action of Rab GTPases to the SNARE complexes. In addition it inhibits the removal of Rab GTPases from the membrane by GDI1. This Rattus norvegicus (Rat) protein is Prenylated Rab acceptor protein 1 (Rabac1).